A 562-amino-acid polypeptide reads, in one-letter code: TBC1 domain family member 24 (562 aa).

A 1,2-diacyl-sn-glycero-3-phospho-(1D-myo-inositol)-binding positions include lysine 36, arginine 40, lysine 238, arginine 242, and 293-297 (RLFSR). Residues 42 to 259 (GHWAKSHTLR…FFHKVRGGQP (218 aa)) enclose the Rab-GAP TBC domain. The TLDc domain occupies 337-549 (EIVSVKEMRD…ISIIEVWGFK (213 aa)). The segment at 450 to 471 (NSSSADKEANSSQSDKDGIDPS) is disordered. Basic and acidic residues predominate over residues 454-468 (ADKEANSSQSDKDGI).

In terms of assembly, interacts with ARF6.

The protein localises to the cell membrane. Its subcellular location is the cytoplasm. It is found in the cytoplasmic vesicle membrane. It localises to the presynapse. Functionally, may act as a GTPase-activating protein for Rab family protein(s). Involved in neuronal projections development, probably through a negative modulation of ARF6 function. Involved in the regulation of synaptic vesicle trafficking. The sequence is that of TBC1 domain family member 24 (tbc1d24) from Xenopus laevis (African clawed frog).